The following is a 449-amino-acid chain: Streptomycin-6-phosphate phosphatase (449 aa).

A signal peptide spans 1-32 (MRFAYGRLPWRRGAVLGSALLVLVTAPAASTA). Position 50 (Asp50) interacts with Mg(2+). Asp50 is a Zn(2+) binding site. Ser99 functions as the Phosphoserine intermediate in the catalytic mechanism. Mg(2+) is bound by residues Asp151 and Thr153. Residues 268–290 (APGGTAPQRCATRNPGRPAGTPD) form a disordered region. Glu321 serves as a coordination point for Mg(2+). The Zn(2+) site is built by Asp326, His330, Asp368, His369, and His412.

It belongs to the alkaline phosphatase family. Mg(2+) serves as cofactor. Requires Zn(2+) as cofactor.

It is found in the secreted. It carries out the reaction streptomycin 6-phosphate + H2O = streptomycin + phosphate. It functions in the pathway antibiotic biosynthesis; streptomycin biosynthesis. Functionally, specifically cleaves both streptomycin-6-phosphate and, more slowly, streptomycin-3''-phosphate during the biosynthesis of streptomycin. The polypeptide is Streptomycin-6-phosphate phosphatase (strK) (Streptomyces griseus).